Consider the following 206-residue polypeptide: Urease accessory protein UreG (206 aa).

Residue 15–22 coordinates GTP; sequence GPVGSGKT.

The protein belongs to the SIMIBI class G3E GTPase family. UreG subfamily. As to quaternary structure, homodimer. UreD, UreF and UreG form a complex that acts as a GTP-hydrolysis-dependent molecular chaperone, activating the urease apoprotein by helping to assemble the nickel containing metallocenter of UreC. The UreE protein probably delivers the nickel.

The protein localises to the cytoplasm. Its function is as follows. Facilitates the functional incorporation of the urease nickel metallocenter. This process requires GTP hydrolysis, probably effectuated by UreG. The chain is Urease accessory protein UreG from Ralstonia pickettii (strain 12J).